The following is a 209-amino-acid chain: MGRYIGPVCRLCRREGVKLYLKGERCYSPKCAMERRPYPPGQHGQKRARRPSDYAVRLREKQKLRRIYGISERQFRNLFEEASKKKGVTGSVFLGLLESRLDNVVYRLGFAVSRRQARQLVRHGHITVNGRRVDLPSYRVRPGDEIAVAEKSRNLELIRQNLEAMKGRKVGPWLSLDVEGMKGKFLRLPDREDLALPVNEQLVIEFYSR.

Zn(2+) is bound by residues Cys-9, Cys-12, Cys-26, and Cys-31. The segment at 9-31 (CRLCRREGVKLYLKGERCYSPKC) adopts a C4-type zinc-finger fold. An S4 RNA-binding domain is found at 100–162 (RLDNVVYRLG…RNLELIRQNL (63 aa)).

Belongs to the universal ribosomal protein uS4 family. In terms of assembly, part of the 30S ribosomal subunit. Contacts protein S5. The interaction surface between S4 and S5 is involved in control of translational fidelity. Zn(2+) is required as a cofactor.

Functionally, one of the primary rRNA binding proteins, it binds directly to 16S rRNA where it helps nucleate assembly of the body and platform of the 30S subunit. In Thermus thermophilus (strain ATCC BAA-163 / DSM 7039 / HB27), this protein is Small ribosomal subunit protein uS4 (rpsD).